The sequence spans 667 residues: Probable Na(+)/H(+) antiporter nhx-9 (667 aa).

A run of 8 helical transmembrane segments spans residues 41–61 (VYVI…FNLM), 73–93 (LLII…LSGA), 97–117 (SHTF…YFMP), 128–148 (VLVF…GSLL), 165–185 (ILVF…AVFE), 192–212 (FLFI…VVLY), 236–256 (LSFF…AIAA), and 268–288 (ILAP…AEMV). Asn310 is a glycosylation site (N-linked (GlcNAc...) asparagine). The next 4 membrane-spanning stretches (helical) occupy residues 325–345 (MLAQ…TISS), 351–371 (LYFI…GIVV), 390–410 (FIMS…VSIP), and 418–438 (MFIT…GITI). A disordered region spans residues 637–667 (TEQLPSETPFHSGRRQSTGDLNATRRADFNV). Residue Thr644 is modified to Phosphothreonine.

Belongs to the monovalent cation:proton antiporter 1 (CPA1) transporter (TC 2.A.36) family. In terms of processing, phosphorylated. In early stage larva, expressed in the twin excretory cell processes. At later larval stages, expression is more restricted, resulting in a 'beads on a chain' appearance.

The protein localises to the cell membrane. Serves some physiological function other than regulation of cellular pH. This Caenorhabditis elegans protein is Probable Na(+)/H(+) antiporter nhx-9 (nhx-9).